The following is a 147-amino-acid chain: Large ribosomal subunit protein bL9 (147 aa).

This sequence belongs to the bacterial ribosomal protein bL9 family.

Functionally, binds to the 23S rRNA. The sequence is that of Large ribosomal subunit protein bL9 from Shouchella clausii (strain KSM-K16) (Alkalihalobacillus clausii).